A 161-amino-acid chain; its full sequence is Nucleotide-binding protein Spea_3114 (161 aa).

Belongs to the YajQ family.

Its function is as follows. Nucleotide-binding protein. This is Nucleotide-binding protein Spea_3114 from Shewanella pealeana (strain ATCC 700345 / ANG-SQ1).